A 395-amino-acid chain; its full sequence is Chalcone synthase 1 (395 aa).

Valine 2 carries the N-acetylvaline modification. Cysteine 169 is a catalytic residue.

Belongs to the thiolase-like superfamily. Chalcone/stilbene synthases family.

The catalysed reaction is (E)-4-coumaroyl-CoA + 3 malonyl-CoA + 3 H(+) = 2',4,4',6'-tetrahydroxychalcone + 3 CO2 + 4 CoA. The protein operates within secondary metabolite biosynthesis; flavonoid biosynthesis. Functionally, the primary product of this enzyme is 4,2',4',6'-tetrahydroxychalcone (also termed naringenin-chalcone or chalcone) which can under specific conditions spontaneously isomerize into naringenin. The protein is Chalcone synthase 1 (CHS1) of Sinapis alba (White mustard).